The chain runs to 514 residues: Cytidine and dCMP deaminase domain-containing protein 1 (514 aa).

Polar residues-rich tracts occupy residues 1–11 (MKEAGQMQNLE) and 18–27 (SVSTQTGSMT). 2 disordered regions span residues 1–27 (MKEA…GSMT) and 55–83 (RQKS…TDKR). The span at 59-83 (QKNEEGKHGPLGDNEERTRVSTDKR) shows a compositional bias: basic and acidic residues. One can recognise a CMP/dCMP-type deaminase 1 domain in the interval 70–168 (GDNEERTRVS…SLLTEASSSE (99 aa)). Zn(2+) contacts are provided by H109, C134, and C137. The Nuclear export signal signature appears at 271-283 (NLRQNMKDLILLL). Residues 317-482 (EIARHCMVQA…LNPSGAYGLE (166 aa)) form the CMP/dCMP-type deaminase 2 domain. H398 serves as a coordination point for Zn(2+). The Proton donor role is filled by E400. C426 and C429 together coordinate Zn(2+). The interval 480–514 (GLEQNEPERRENGVLRPVPQKEEQHQDKKLRLGIH) is disordered. Basic and acidic residues predominate over residues 485–514 (EPERRENGVLRPVPQKEEQHQDKKLRLGIH). The short motif at 488–510 (RRENGVLRPVPQKEEQHQDKKLR) is the Bipartite nuclear localization signal element.

Belongs to the cytidine and deoxycytidylate deaminase family. Requires Zn(2+) as cofactor. In terms of tissue distribution, widely expressed. Expressed at high levels in the testis.

Its subcellular location is the cytoplasm. It is found in the nucleus. It carries out the reaction 2'-deoxycytidine + H2O + H(+) = 2'-deoxyuridine + NH4(+). The catalysed reaction is cytidine + H2O + H(+) = uridine + NH4(+). Its function is as follows. Catalyzes the deamination of cytidine and deoxycytidine into uridine and deoxyuridine, respectively. May play an important role in testicular development and spermatogenesis. In Homo sapiens (Human), this protein is Cytidine and dCMP deaminase domain-containing protein 1 (CDADC1).